Here is a 250-residue protein sequence, read N- to C-terminus: Phosphatidylglycerol--prolipoprotein diacylglyceryl transferase (250 aa).

4 helical membrane passes run 11–31 (LAIRWYGVIISIGAALGLLLA), 49–69 (FLIAFPSAIIGARLYYVIFEF), 84–104 (QGGLAIHGGIIFGVLAVYIYL), and 109–129 (ESFFEYVDVAAPSIILGQAIG). Residue Arg130 participates in a 1,2-diacyl-sn-glycero-3-phospho-(1'-sn-glycerol) binding. A run of 3 helical transmembrane segments spans residues 169-189 (PTFLYESIWNFIVCIFLVYLL), 196-216 (GIVFMAYIGLYSLGRFFIEGL), and 228-248 (VAQLISVLGIILSIFFIYNII).

It belongs to the Lgt family.

The protein resides in the cell membrane. It catalyses the reaction L-cysteinyl-[prolipoprotein] + a 1,2-diacyl-sn-glycero-3-phospho-(1'-sn-glycerol) = an S-1,2-diacyl-sn-glyceryl-L-cysteinyl-[prolipoprotein] + sn-glycerol 1-phosphate + H(+). The protein operates within protein modification; lipoprotein biosynthesis (diacylglyceryl transfer). Its function is as follows. Catalyzes the transfer of the diacylglyceryl group from phosphatidylglycerol to the sulfhydryl group of the N-terminal cysteine of a prolipoprotein, the first step in the formation of mature lipoproteins. In Clostridium botulinum (strain 657 / Type Ba4), this protein is Phosphatidylglycerol--prolipoprotein diacylglyceryl transferase.